A 200-amino-acid polypeptide reads, in one-letter code: Thymidine kinase (200 aa).

Residues 15 to 22 and 88 to 91 each bind ATP; these read GPMYSGKS and DEVQ. Glu89 (proton acceptor) is an active-site residue. Zn(2+) is bound by residues Cys145, Cys148, Cys177, and Cys180.

This sequence belongs to the thymidine kinase family. As to quaternary structure, homotetramer.

It localises to the cytoplasm. It carries out the reaction thymidine + ATP = dTMP + ADP + H(+). This chain is Thymidine kinase, found in Mycoplasma mobile (strain ATCC 43663 / 163K / NCTC 11711) (Mesomycoplasma mobile).